Reading from the N-terminus, the 701-residue chain is Ribosomal RNA large subunit methyltransferase K/L (701 aa).

One can recognise a THUMP domain in the interval 43 to 155; it reads LLYKSLMWSR…NNILHIMLDL (113 aa).

It belongs to the methyltransferase superfamily. RlmKL family.

The protein resides in the cytoplasm. It catalyses the reaction guanosine(2445) in 23S rRNA + S-adenosyl-L-methionine = N(2)-methylguanosine(2445) in 23S rRNA + S-adenosyl-L-homocysteine + H(+). The catalysed reaction is guanosine(2069) in 23S rRNA + S-adenosyl-L-methionine = N(2)-methylguanosine(2069) in 23S rRNA + S-adenosyl-L-homocysteine + H(+). In terms of biological role, specifically methylates the guanine in position 2445 (m2G2445) and the guanine in position 2069 (m7G2069) of 23S rRNA. The sequence is that of Ribosomal RNA large subunit methyltransferase K/L from Buchnera aphidicola subsp. Acyrthosiphon pisum (strain APS) (Acyrthosiphon pisum symbiotic bacterium).